The sequence spans 301 residues: Probable alpha-L-glutamate ligase (301 aa).

In terms of domain architecture, ATP-grasp spans 104 to 287; sequence LQLLSRKGVG…IAGMVIDFIE (184 aa). Residues K141, 178-179, D187, and 211-213 contribute to the ATP site; these read EY and RSN. D248, E260, and N262 together coordinate Mg(2+). Residues D248, E260, and N262 each contribute to the Mn(2+) site.

It belongs to the RimK family. Requires Mg(2+) as cofactor. The cofactor is Mn(2+).

This Pseudoalteromonas translucida (strain TAC 125) protein is Probable alpha-L-glutamate ligase.